Consider the following 270-residue polypeptide: MSNLQTRIITAIVLGTITLWLTWVGGVGFTLFSIAIGLAMFYEWTELSATRQTAFSRLFGWAWLIVTGILLILDRGALLTIGFLVAGCAILLVTQWKSGRGWPAAGLFYAGFSALSLSLLRGDEPFGFTTIVFLFAVVWSTDITAYFNGRALGGPKLAPRFSPNKTWSGAIGGAAAAVAGGLLVASLVAAPGGWGVPVLALLLSIVSQIGDLAESWVKRQFGAKDSGRLLPGHGGVLDRVDGLVAAAALLYLFGAIFAEPDVLSAIFFSF.

Helical transmembrane passes span 19–39 (LWLT…IGLA), 53–73 (TAFS…LLIL), 76–96 (GALL…VTQW), 101–121 (GWPA…SLLR), 126–146 (FGFT…ITAY), 183–203 (LVAS…ALLL), and 248–268 (ALLY…AIFF).

Belongs to the CDS family.

The protein resides in the cell inner membrane. The enzyme catalyses a 1,2-diacyl-sn-glycero-3-phosphate + CTP + H(+) = a CDP-1,2-diacyl-sn-glycerol + diphosphate. It participates in phospholipid metabolism; CDP-diacylglycerol biosynthesis; CDP-diacylglycerol from sn-glycerol 3-phosphate: step 3/3. This is Phosphatidate cytidylyltransferase (cdsA) from Brucella abortus (strain 2308).